The following is a 107-amino-acid chain: Large ribosomal subunit protein P1 (107 aa).

The span at 67–82 (GPASAAPAGAAGAAAP) shows a compositional bias: low complexity. Residues 67 to 107 (GPASAAPAGAAGAAAPAEEKAEEKEEEKEESDEDMGFGLFD) form a disordered region. The segment covering 90-101 (KEEEKEESDEDM) has biased composition (acidic residues).

It belongs to the eukaryotic ribosomal protein P1/P2 family. In terms of assembly, P1 and P2 exist as dimers at the large ribosomal subunit.

The protein resides in the cytoplasm. In terms of biological role, plays an important role in the elongation step of protein synthesis. This Penicillium crustosum (Blue mold fungus) protein is Large ribosomal subunit protein P1.